The chain runs to 1535 residues: CLIP-associating protein 1 (1535 aa).

2 HEAT repeats span residues 87 to 124 (AQIG…QAAN) and 163 to 200 (LTLS…HVGE). The segment at 237-290 (NEKNFDDEDSVDGNRPSSASSSSSKAPSSSRRNVNLGTTRRLMSSSLGSKSSAA) is disordered. Residue serine 246 is modified to Phosphoserine. Residues 252 to 266 (PSSASSSSSKAPSSS) show a composition bias toward low complexity. Polar residues predominate over residues 267 to 279 (RRNVNLGTTRRLM). Over residues 280 to 290 (SSSLGSKSSAA) the composition is skewed to low complexity. HEAT repeat units lie at residues 405–440 (HGAE…IRHT) and 441–477 (HIPR…EWQT). Disordered regions lie at residues 543–600 (SDSI…RSRS) and 612–782 (SKVS…GRIP). A phosphoserine mark is found at serine 545, serine 548, serine 558, serine 559, and serine 568. Residues 548 to 567 (SLPQSDRSSSSSQESLNRPL) are compositionally biased toward low complexity. Residues 579 to 594 (SRGSTVSTKSVSTTGS) are compositionally biased toward low complexity. The residue at position 600 (serine 600) is a Phosphoserine. Positions 612 to 633 (SKVSSSSGSPAFSSAAALPPGS) are enriched in low complexity. 4 positions are modified to phosphoserine: serine 636, serine 646, serine 647, and serine 649. The segment covering 645–658 (QSSGSTTNVASTPD) has biased composition (polar residues). At threonine 656 the chain carries Phosphothreonine. The interaction with microtubules, MAPRE1 and MAPRE3 stretch occupies residues 662–782 (RSRAKVVSQS…FGLGQSGRIP (121 aa)). Residues 673 to 695 (RSRSANPAGAGSRSSSPGKLLGS) show a composition bias toward low complexity. Phosphoserine is present on residues serine 684, serine 688, serine 695, and serine 702. Threonine 708 is modified (phosphothreonine). Phosphoserine is present on serine 711. A compositionally biased stretch (polar residues) spans 721 to 730 (QGCSRETSPN). Phosphoserine occurs at positions 784, 794, and 820. One copy of the HEAT 5 repeat lies at 971–1008 (QQFNILMRFIVDQTQTPNLKVKVAILKYIESLARQMDP). The interval 1078-1157 (LKNSSNTGVG…APSHKTLRRS (80 aa)) is disordered. Positions 1079-1094 (KNSSNTGVGSPSNTIG) are enriched in polar residues. Serine 1088 is subject to Phosphoserine. Threonine 1092 and threonine 1096 each carry phosphothreonine. Over residues 1103-1112 (SRTSPLTSPT) the composition is skewed to low complexity. Residues serine 1110, phenylalanine 1139, and serine 1193 each carry the phosphoserine modification. A compositionally biased stretch (basic and acidic residues) spans 1200–1213 (PIKRDGKKDCDIVS). Disordered stretches follow at residues 1200–1233 (PIKR…EIEG) and 1245–1266 (LNTQ…PYPY). Position 1220 is a phosphoserine (serine 1220). The interval 1251 to 1535 (RAFPGPRARE…SSSSDVSTHS (285 aa)) is interaction with CLIP2 and RSN. The interval 1251–1535 (RAFPGPRARE…SSSSDVSTHS (285 aa)) is interaction with PHLDB2. The segment at 1253–1535 (FPGPRAREYN…SSSSDVSTHS (283 aa)) is localization to kinetochores. The stretch at 1296–1327 (DHSDLVADLLKELSNHNERVEERKGALLELLK) forms a coiled coil. 2 HEAT repeats span residues 1339 to 1376 (EHFK…NQPA) and 1457 to 1494 (QLLV…VIGE).

Belongs to the CLASP family. In terms of assembly, interacts with ERC1, MAPRE1, MAPRE3, microtubules, and PHLDB2. The interaction with ERC1 may be mediated by PHLDB2. Interacts with GCC2; recruits CLASP1 to Golgi membranes. Interacts with CLIP2 and RSN. Interacts with MACF1. Interacts with mtcl2 and MTCL1. In terms of tissue distribution, highly expressed in brain and heart and at lower levels in kidney, lung, skeletal muscle and testis.

It is found in the cytoplasm. The protein localises to the cytoskeleton. It localises to the microtubule organizing center. Its subcellular location is the centrosome. The protein resides in the chromosome. It is found in the centromere. The protein localises to the kinetochore. It localises to the spindle. Its subcellular location is the golgi apparatus. The protein resides in the trans-Golgi network. Microtubule plus-end tracking protein that promotes the stabilization of dynamic microtubules. Involved in the nucleation of noncentrosomal microtubules originating from the trans-Golgi network (TGN). Required for the polarization of the cytoplasmic microtubule arrays in migrating cells towards the leading edge of the cell. May act at the cell cortex to enhance the frequency of rescue of depolymerizing microtubules by attaching their plus-ends to cortical platforms composed of ERC1 and PHLDB2. This cortical microtubule stabilizing activity is regulated at least in part by phosphatidylinositol 3-kinase signaling. Also performs a similar stabilizing function at the kinetochore which is essential for the bipolar alignment of chromosomes on the mitotic spindle. In Mus musculus (Mouse), this protein is CLIP-associating protein 1 (Clasp1).